Here is a 334-residue protein sequence, read N- to C-terminus: Holliday junction branch migration complex subunit RuvB (334 aa).

The tract at residues 1–180 is large ATPase domain (RuvB-L); the sequence is MSEFLTPERT…FGIILELDFY (180 aa). ATP is bound by residues leucine 19, arginine 20, glycine 61, lysine 64, threonine 65, threonine 66, 127–129, arginine 170, tyrosine 180, and arginine 217; that span reads EDF. Threonine 65 is a binding site for Mg(2+). The tract at residues 181-251 is small ATPAse domain (RuvB-S); that stretch reads TVKELKEIIK…IVLKTMEVLN (71 aa). The tract at residues 254–334 is head domain (RuvB-H); the sequence is AEGLDEFDRK…KYEVPENRLF (81 aa). DNA-binding residues include arginine 309 and arginine 314.

Belongs to the RuvB family. As to quaternary structure, homohexamer. Forms an RuvA(8)-RuvB(12)-Holliday junction (HJ) complex. HJ DNA is sandwiched between 2 RuvA tetramers; dsDNA enters through RuvA and exits via RuvB. An RuvB hexamer assembles on each DNA strand where it exits the tetramer. Each RuvB hexamer is contacted by two RuvA subunits (via domain III) on 2 adjacent RuvB subunits; this complex drives branch migration. In the full resolvosome a probable DNA-RuvA(4)-RuvB(12)-RuvC(2) complex forms which resolves the HJ.

The protein resides in the cytoplasm. It catalyses the reaction ATP + H2O = ADP + phosphate + H(+). Its function is as follows. The RuvA-RuvB-RuvC complex processes Holliday junction (HJ) DNA during genetic recombination and DNA repair, while the RuvA-RuvB complex plays an important role in the rescue of blocked DNA replication forks via replication fork reversal (RFR). RuvA specifically binds to HJ cruciform DNA, conferring on it an open structure. The RuvB hexamer acts as an ATP-dependent pump, pulling dsDNA into and through the RuvAB complex. RuvB forms 2 homohexamers on either side of HJ DNA bound by 1 or 2 RuvA tetramers; 4 subunits per hexamer contact DNA at a time. Coordinated motions by a converter formed by DNA-disengaged RuvB subunits stimulates ATP hydrolysis and nucleotide exchange. Immobilization of the converter enables RuvB to convert the ATP-contained energy into a lever motion, pulling 2 nucleotides of DNA out of the RuvA tetramer per ATP hydrolyzed, thus driving DNA branch migration. The RuvB motors rotate together with the DNA substrate, which together with the progressing nucleotide cycle form the mechanistic basis for DNA recombination by continuous HJ branch migration. Branch migration allows RuvC to scan DNA until it finds its consensus sequence, where it cleaves and resolves cruciform DNA. The polypeptide is Holliday junction branch migration complex subunit RuvB (Thermotoga petrophila (strain ATCC BAA-488 / DSM 13995 / JCM 10881 / RKU-1)).